The sequence spans 73 residues: Sec-independent protein translocase protein TatA (73 aa).

Residues 1–21 (MGSFSIGHWLIVLAIIVLLFG) traverse the membrane as a helical segment. The tract at residues 43-73 (MEDTTPEKSEKVEHKEESATSQKIEETTKNA) is disordered.

It belongs to the TatA/E family. In terms of assembly, the Tat system comprises two distinct complexes: a TatABC complex, containing multiple copies of TatA, TatB and TatC subunits, and a separate TatA complex, containing only TatA subunits. Substrates initially bind to the TatABC complex, which probably triggers association of the separate TatA complex to form the active translocon.

The protein localises to the cell inner membrane. Its function is as follows. Part of the twin-arginine translocation (Tat) system that transports large folded proteins containing a characteristic twin-arginine motif in their signal peptide across membranes. TatA could form the protein-conducting channel of the Tat system. In Campylobacter concisus (strain 13826), this protein is Sec-independent protein translocase protein TatA.